Reading from the N-terminus, the 620-residue chain is Probable potassium transport system protein Kup (620 aa).

The next 12 membrane-spanning stretches (helical) occupy residues 11–31, 51–71, 100–120, 138–158, 167–187, 202–222, 246–266, 288–308, 334–354, 364–384, 396–416, and 418–438; these read LAFL…LYAF, ILSL…LLLV, IAML…VITP, LAPY…AVQA, FFAP…AHAI, AVHF…LVVL, WFAL…AYLL, LILL…SGIF, GQIY…FVML, AAYG…LVLV, VVTI…STST, and LMEG…VMYI.

This sequence belongs to the HAK/KUP transporter (TC 2.A.72) family.

The protein localises to the cell inner membrane. The catalysed reaction is K(+)(in) + H(+)(in) = K(+)(out) + H(+)(out). In terms of biological role, transport of potassium into the cell. Likely operates as a K(+):H(+) symporter. This is Probable potassium transport system protein Kup from Vibrio cholerae serotype O1 (strain ATCC 39315 / El Tor Inaba N16961).